Here is a 243-residue protein sequence, read N- to C-terminus: Phosphoribosyl isomerase A (243 aa).

The active-site Proton acceptor is Asp9. Asp128 serves as the catalytic Proton donor.

It belongs to the HisA/HisF family.

The protein resides in the cytoplasm. The enzyme catalyses 1-(5-phospho-beta-D-ribosyl)-5-[(5-phospho-beta-D-ribosylamino)methylideneamino]imidazole-4-carboxamide = 5-[(5-phospho-1-deoxy-D-ribulos-1-ylimino)methylamino]-1-(5-phospho-beta-D-ribosyl)imidazole-4-carboxamide. It catalyses the reaction N-(5-phospho-beta-D-ribosyl)anthranilate = 1-(2-carboxyphenylamino)-1-deoxy-D-ribulose 5-phosphate. The protein operates within amino-acid biosynthesis; L-histidine biosynthesis; L-histidine from 5-phospho-alpha-D-ribose 1-diphosphate: step 4/9. Its pathway is amino-acid biosynthesis; L-tryptophan biosynthesis; L-tryptophan from chorismate: step 3/5. In terms of biological role, involved in both the histidine and tryptophan biosynthetic pathways. In Mycobacterium avium (strain 104), this protein is Phosphoribosyl isomerase A.